Here is a 375-residue protein sequence, read N- to C-terminus: Arabinose metabolism transcriptional repressor (375 aa).

The HTH gntR-type domain maps to methionine 1–arginine 70. Residues glutamate 30–aspartate 49 constitute a DNA-binding region (H-T-H motif).

The protein localises to the cytoplasm. In terms of biological role, transcriptional repressor of the arabinose utilization genes. The polypeptide is Arabinose metabolism transcriptional repressor (araR) (Halalkalibacterium halodurans (strain ATCC BAA-125 / DSM 18197 / FERM 7344 / JCM 9153 / C-125) (Bacillus halodurans)).